Here is a 358-residue protein sequence, read N- to C-terminus: L-Ala-D/L-Glu epimerase (358 aa).

3 residues coordinate substrate: Arg24, Thr135, and Lys160. The active-site Proton acceptor; specific for (R)-substrate epimerization is the Lys162. Mg(2+)-binding residues include Asp190, Glu218, and Asp243. Lys267 serves as the catalytic Proton acceptor; specific for (S)-substrate epimerization. 3 residues coordinate substrate: Cys295, Asp320, and Asp322.

Belongs to the mandelate racemase/muconate lactonizing enzyme family. The cofactor is Mg(2+).

The catalysed reaction is L-alanyl-L-glutamate = L-alanyl-D-glutamate. The protein operates within cell wall degradation; peptidoglycan degradation. Functionally, catalyzes the epimerization of L-Ala-D-Glu to L-Ala-L-Glu and has probably a role in the metabolism of the murein peptide, of which L-Ala-D-Glu is a component. Is also able to catalyze the epimerization of L-Ala-D-Asp. This Clostridium acetobutylicum (strain ATCC 824 / DSM 792 / JCM 1419 / IAM 19013 / LMG 5710 / NBRC 13948 / NRRL B-527 / VKM B-1787 / 2291 / W) protein is L-Ala-D/L-Glu epimerase.